We begin with the raw amino-acid sequence, 102 residues long: Co-chaperonin GroES (102 aa).

This sequence belongs to the GroES chaperonin family. As to quaternary structure, heptamer of 7 subunits arranged in a ring. Interacts with the chaperonin GroEL.

It is found in the cytoplasm. In terms of biological role, together with the chaperonin GroEL, plays an essential role in assisting protein folding. The GroEL-GroES system forms a nano-cage that allows encapsulation of the non-native substrate proteins and provides a physical environment optimized to promote and accelerate protein folding. GroES binds to the apical surface of the GroEL ring, thereby capping the opening of the GroEL channel. The polypeptide is Co-chaperonin GroES (Chlamydia muridarum (strain MoPn / Nigg)).